Reading from the N-terminus, the 575-residue chain is Transcription factor E3 (575 aa).

Phosphoserine; by MTOR is present on serine 47. The span at 90–126 (ATLSASSSAGGSRTPAMSSSSSSRVLLRQQLMRAQAQ) shows a compositional bias: low complexity. Positions 90–153 (ATLSASSSAG…SPAPASPAIS (64 aa)) are disordered. The span at 127–136 (EQERRERREQ) shows a compositional bias: basic and acidic residues. At arginine 188 the chain carries Asymmetric dimethylarginine. Positions 211 to 246 (LASQALTPPPGPASAQPLPAPEAAHTTGPTGSAPNS) are disordered. A strong transcription activation domain region spans residues 260 to 271 (EIDDVIDEIISL). Residue serine 321 is modified to Phosphoserine; by MTOR. Lysine 339 is covalently cross-linked (Glycyl lysine isopeptide (Lys-Gly) (interchain with G-Cter in SUMO2)). The bHLH domain occupies 346 to 399 (QKKDNHNLIERRRRFNINDRIKELGTLIPKSSDPEMRWNKGTILKASVDYIRKL). A Nuclear localization signal motif is present at residues 356 to 359 (RRRR). The tract at residues 409 to 430 (LESRQRSLEQANRSLQLRIQEL) is leucine-zipper. Disordered regions lie at residues 473–498 (GAAT…PPSD) and 534–575 (GGLS…EEES). Residues 539 to 575 (GALSPLRAASDPLLSSVSPAVSKASSRRSSFSMEEES) show a composition bias toward low complexity. Residues serine 542, serine 548, serine 554, serine 556, serine 560, and serine 568 each carry the phosphoserine modification.

This sequence belongs to the MiT/TFE family. As to quaternary structure, homodimer and heterodimer; with TFEB or MITF. Interacts with RRAGC/RagC GDP-bound and RRAGD/RagD GDP-bound; promoting its recruitment to lysosomal membrane in the presence of nutrients. Interacts with TSC22D1; the interaction is enhanced in the presence of TGF-beta. Post-translationally, sumoylated; does not affect dimerization with MITF. Phosphorylation ar Ser-47 and Ser-321 by MTOR via non-canonical mTORC1 pathway regulates its stability and subcellular location, respectively. When nutrients are present, phosphorylation by MTOR at Ser-47 promotes ubiquitination by the SCF(BTRC) complex, followed by degradation. When nutrients are present, phosphorylation by MTOR at Ser-321 also promotes association with 14-3-3/YWHA adapters and retention in the cytosol. Phosphorylation at Ser-47 plays a more critical role than phosphorylation at Ser-321 for TFE3 inactivation. Inhibition of mTORC1, starvation and lysosomal disruption, promotes dephosphorylation and transcription factor activity. In terms of processing, ubiquitinated by the SCF(BTRC) and SCF(FBXW11) complexes following phosphorylation at Ser-47 by MTOR, leading to its degradation by the proteasome. As to expression, ubiquitous in fetal and adult tissues.

It localises to the cytoplasm. The protein localises to the cytosol. Its subcellular location is the nucleus. The protein resides in the lysosome membrane. Its function is as follows. Transcription factor that acts as a master regulator of lysosomal biogenesis and immune response. Specifically recognizes and binds E-box sequences (5'-CANNTG-3'); efficient DNA-binding requires dimerization with itself or with another MiT/TFE family member such as TFEB or MITF. Involved in the cellular response to amino acid availability by acting downstream of MTOR: in the presence of nutrients, TFE3 phosphorylation by MTOR promotes its inactivation. Upon starvation or lysosomal stress, inhibition of MTOR induces TFE3 dephosphorylation, resulting in transcription factor activity. Specifically recognizes and binds the CLEAR-box sequence (5'-GTCACGTGAC-3') present in the regulatory region of many lysosomal genes, leading to activate their expression, thereby playing a central role in expression of lysosomal genes. Maintains the pluripotent state of embryonic stem cells by promoting the expression of genes such as ESRRB; mTOR-dependent TFE3 cytosolic retention and inactivation promotes exit from pluripotency. Required to maintain the naive pluripotent state of hematopoietic stem cell; mTOR-dependent cytoplasmic retention of TFE3 promotes the exit of hematopoietic stem cell from pluripotency. TFE3 activity is also involved in the inhibition of neuronal progenitor differentiation. Acts as a positive regulator of browning of adipose tissue by promoting expression of target genes; mTOR-dependent phosphorylation promotes cytoplasmic retention of TFE3 and inhibits browning of adipose tissue. In association with TFEB, activates the expression of CD40L in T-cells, thereby playing a role in T-cell-dependent antibody responses in activated CD4(+) T-cells and thymus-dependent humoral immunity. Specifically recognizes the MUE3 box, a subset of E-boxes, present in the immunoglobulin enhancer. It also binds very well to a USF/MLTF site. Promotes TGF-beta-induced transcription of COL1A2; via its interaction with TSC22D1 at E-boxes in the gene proximal promoter. May regulate lysosomal positioning in response to nutrient deprivation by promoting the expression of PIP4P1. In Homo sapiens (Human), this protein is Transcription factor E3.